Consider the following 525-residue polypeptide: GMP synthase [glutamine-hydrolyzing] (525 aa).

One can recognise a Glutamine amidotransferase type-1 domain in the interval 9–207; it reads RILILDFGSQ…VLTISGCEAL (199 aa). C86 (nucleophile) is an active-site residue. Active-site residues include H181 and E183. The region spanning 208–400 is the GMPS ATP-PPase domain; the sequence is WTPAKIVDDA…LGLPYDMVYR (193 aa). 235-241 is a binding site for ATP; it reads SGGVDSS.

As to quaternary structure, homodimer.

It carries out the reaction XMP + L-glutamine + ATP + H2O = GMP + L-glutamate + AMP + diphosphate + 2 H(+). The protein operates within purine metabolism; GMP biosynthesis; GMP from XMP (L-Gln route): step 1/1. Functionally, catalyzes the synthesis of GMP from XMP. The chain is GMP synthase [glutamine-hydrolyzing] from Marinobacter nauticus (strain ATCC 700491 / DSM 11845 / VT8) (Marinobacter aquaeolei).